The following is a 31-amino-acid chain: Photosystem I reaction center subunit XII (31 aa).

Residues 7–26 traverse the membrane as a helical segment; sequence QIFIALLTALIPAFFALKLG.

Belongs to the PsaM family.

It is found in the plastid. It localises to the chloroplast thylakoid membrane. This chain is Photosystem I reaction center subunit XII, found in Euglena granulata.